A 765-amino-acid polypeptide reads, in one-letter code: Phosphoribosylformylglycinamidine synthase subunit PurL (765 aa).

Residue histidine 41 is part of the active site. The ATP site is built by tyrosine 44 and lysine 83. Mg(2+) is bound at residue glutamate 85. Substrate is bound by residues 86-89 (SHNH) and arginine 108. The Proton acceptor role is filled by histidine 87. Mg(2+) is bound at residue aspartate 109. Glutamine 232 contacts substrate. Mg(2+) is bound at residue aspartate 260. 304-306 (ESQ) is a binding site for substrate. Residues aspartate 503 and glycine 540 each contribute to the ATP site. Mg(2+) is bound at residue asparagine 541. Position 543 (serine 543) interacts with substrate.

Belongs to the FGAMS family. As to quaternary structure, monomer. Part of the FGAM synthase complex composed of 1 PurL, 1 PurQ and 2 PurS subunits.

It localises to the cytoplasm. The enzyme catalyses N(2)-formyl-N(1)-(5-phospho-beta-D-ribosyl)glycinamide + L-glutamine + ATP + H2O = 2-formamido-N(1)-(5-O-phospho-beta-D-ribosyl)acetamidine + L-glutamate + ADP + phosphate + H(+). It functions in the pathway purine metabolism; IMP biosynthesis via de novo pathway; 5-amino-1-(5-phospho-D-ribosyl)imidazole from N(2)-formyl-N(1)-(5-phospho-D-ribosyl)glycinamide: step 1/2. In terms of biological role, part of the phosphoribosylformylglycinamidine synthase complex involved in the purines biosynthetic pathway. Catalyzes the ATP-dependent conversion of formylglycinamide ribonucleotide (FGAR) and glutamine to yield formylglycinamidine ribonucleotide (FGAM) and glutamate. The FGAM synthase complex is composed of three subunits. PurQ produces an ammonia molecule by converting glutamine to glutamate. PurL transfers the ammonia molecule to FGAR to form FGAM in an ATP-dependent manner. PurS interacts with PurQ and PurL and is thought to assist in the transfer of the ammonia molecule from PurQ to PurL. This is Phosphoribosylformylglycinamidine synthase subunit PurL from Synechococcus sp. (strain WH7803).